A 1067-amino-acid chain; its full sequence is Chitinase-like protein C25A8.4 (1067 aa).

An N-terminal signal peptide occupies residues 1-18 (MGIKTLIWLSILVVGIYC). GH18 domains are found at residues 26–364 (PVHY…IRNT), 372–727 (CTRL…QVCQ), and 743–1067 (FVVS…HKCR). A disulfide bond links C30 and C51. N-linked (GlcNAc...) asparagine glycans are attached at residues N47 and N216. C376 and C397 are joined by a disulfide. N475, N538, and N710 each carry an N-linked (GlcNAc...) asparagine glycan. C747 and C768 form a disulfide bridge. 2 N-linked (GlcNAc...) asparagine glycosylation sites follow: N797 and N830. Residue E855 is the Proton donor of the active site. 3 N-linked (GlcNAc...) asparagine glycosylation sites follow: N887, N933, and N1010.

It belongs to the glycosyl hydrolase 18 family.

It is found in the secreted. Functionally, putative chitinase. In Caenorhabditis elegans, this protein is Chitinase-like protein C25A8.4 (cht-3).